A 312-amino-acid polypeptide reads, in one-letter code: Phosphoribosylglycinamide formyltransferase, chloroplastic (312 aa).

The N-terminal 73 residues, 1–73, are a transit peptide targeting the chloroplast; it reads MEAQQIISRF…EVCSSSWRIW (73 aa). 109 to 111 is a binding site for N(1)-(5-phospho-beta-D-ribosyl)glycinamide; the sequence is GSN. (6R)-10-formyltetrahydrofolate contacts are provided by residues lysine 162, 187–190, and asparagine 204; that span reads LKLI. Residue histidine 206 is the Proton donor of the active site. (6R)-10-formyltetrahydrofolate is bound at residue aspartate 247. Glutamate 276 serves as a coordination point for N(1)-(5-phospho-beta-D-ribosyl)glycinamide.

The protein belongs to the GART family.

The protein localises to the plastid. It localises to the chloroplast. It carries out the reaction N(1)-(5-phospho-beta-D-ribosyl)glycinamide + (6R)-10-formyltetrahydrofolate = N(2)-formyl-N(1)-(5-phospho-beta-D-ribosyl)glycinamide + (6S)-5,6,7,8-tetrahydrofolate + H(+). It functions in the pathway purine metabolism; IMP biosynthesis via de novo pathway; N(2)-formyl-N(1)-(5-phospho-D-ribosyl)glycinamide from N(1)-(5-phospho-D-ribosyl)glycinamide (10-formyl THF route): step 1/1. The sequence is that of Phosphoribosylglycinamide formyltransferase, chloroplastic (PUR3) from Vigna unguiculata (Cowpea).